Consider the following 506-residue polypeptide: GMP synthase [glutamine-hydrolyzing] (506 aa).

In terms of domain architecture, Glutamine amidotransferase type-1 spans 4–192 (KLIILDFGSQ…FLDICGMKRD (189 aa)). C79 (nucleophile) is an active-site residue. Residues H167 and E169 contribute to the active site. Positions 193-381 (WTPASFIEAT…LGMMPHLIHR (189 aa)) constitute a GMPS ATP-PPase domain. Residue 220–226 (SGGVDSS) coordinates ATP.

Homodimer.

It catalyses the reaction XMP + L-glutamine + ATP + H2O = GMP + L-glutamate + AMP + diphosphate + 2 H(+). It functions in the pathway purine metabolism; GMP biosynthesis; GMP from XMP (L-Gln route): step 1/1. In terms of biological role, catalyzes the synthesis of GMP from XMP. The sequence is that of GMP synthase [glutamine-hydrolyzing] from Porphyromonas gingivalis (strain ATCC BAA-308 / W83).